The primary structure comprises 172 residues: Adenine phosphoribosyltransferase (172 aa).

Belongs to the purine/pyrimidine phosphoribosyltransferase family. As to quaternary structure, homodimer.

It is found in the cytoplasm. It catalyses the reaction AMP + diphosphate = 5-phospho-alpha-D-ribose 1-diphosphate + adenine. The protein operates within purine metabolism; AMP biosynthesis via salvage pathway; AMP from adenine: step 1/1. Functionally, catalyzes a salvage reaction resulting in the formation of AMP, that is energically less costly than de novo synthesis. The chain is Adenine phosphoribosyltransferase from Trichormus variabilis (strain ATCC 29413 / PCC 7937) (Anabaena variabilis).